The sequence spans 431 residues: Trigger factor (431 aa).

A PPIase FKBP-type domain is found at 165-250 (TDTAVFDFEG…LHQIKTKKIP (86 aa)).

It belongs to the FKBP-type PPIase family. Tig subfamily.

It localises to the cytoplasm. It carries out the reaction [protein]-peptidylproline (omega=180) = [protein]-peptidylproline (omega=0). Functionally, involved in protein export. Acts as a chaperone by maintaining the newly synthesized protein in an open conformation. Functions as a peptidyl-prolyl cis-trans isomerase. In Aster yellows witches'-broom phytoplasma (strain AYWB), this protein is Trigger factor.